Here is a 1534-residue protein sequence, read N- to C-terminus: Alpha-2-macroglobulin homolog (1534 aa).

The signal sequence occupies residues 1–38 (MDTQRFQSQFHWHLSFKFSGAIAACLSLSLVGTGLANA).

It belongs to the protease inhibitor I39 (alpha-2-macroglobulin) family. Bacterial alpha-2-macroglobulin subfamily.

In Escherichia coli O157:H7, this protein is Alpha-2-macroglobulin homolog (yfaS).